Reading from the N-terminus, the 144-residue chain is Putative acetyltransferase SAOUHSC_00995 (144 aa).

Residues 1–141 (MFSKVNNQKM…EHIEMTKKLT (141 aa)) form the N-acetyltransferase domain. Residues 71–73 (VAV), glycine 79, and 112–114 (PFY) contribute to the CoA site.

It belongs to the UPF0039 (ElaA) family.

Functionally, could catalyze the transfer of an acetyl group from acetyl coenzyme A (AcCoA) to an acceptor substrate and release both CoA and the acetylated product. This chain is Putative acetyltransferase SAOUHSC_00995, found in Staphylococcus aureus (strain NCTC 8325 / PS 47).